The primary structure comprises 177 residues: CDP-archaeol synthase (177 aa).

5 helical membrane passes run 6–26 (LFASLWYILPAYVANASACIF), 54–74 (CIFGILCGTLVGLIQGILVDF), 90–110 (VILAFFLSVGAIVGDAVGSFI), 124–144 (LLDQLDFVIGALAFGYIVAPI), and 148–168 (MIIIICLFTVFVHLLGNIIAY).

It belongs to the CDP-archaeol synthase family. It depends on Mg(2+) as a cofactor.

The protein resides in the cell membrane. It catalyses the reaction 2,3-bis-O-(geranylgeranyl)-sn-glycerol 1-phosphate + CTP + H(+) = CDP-2,3-bis-O-(geranylgeranyl)-sn-glycerol + diphosphate. It functions in the pathway membrane lipid metabolism; glycerophospholipid metabolism. In terms of biological role, catalyzes the formation of CDP-2,3-bis-(O-geranylgeranyl)-sn-glycerol (CDP-archaeol) from 2,3-bis-(O-geranylgeranyl)-sn-glycerol 1-phosphate (DGGGP) and CTP. This reaction is the third ether-bond-formation step in the biosynthesis of archaeal membrane lipids. The chain is CDP-archaeol synthase from Methanocaldococcus jannaschii (strain ATCC 43067 / DSM 2661 / JAL-1 / JCM 10045 / NBRC 100440) (Methanococcus jannaschii).